The following is a 432-amino-acid chain: Amino-acid acetyltransferase (432 aa).

Residues 286 to 425 (EVVREASIED…ASLYNYQRNS (140 aa)) form the N-acetyltransferase domain.

It belongs to the acetyltransferase family. ArgA subfamily.

The protein localises to the cytoplasm. It carries out the reaction L-glutamate + acetyl-CoA = N-acetyl-L-glutamate + CoA + H(+). Its pathway is amino-acid biosynthesis; L-arginine biosynthesis; N(2)-acetyl-L-ornithine from L-glutamate: step 1/4. The chain is Amino-acid acetyltransferase from Pseudomonas putida (strain GB-1).